Consider the following 949-residue polypeptide: Bifunctional uridylyltransferase/uridylyl-removing enzyme (949 aa).

The interval methionine 1 to alanine 377 is uridylyltransferase. The tract at residues glycine 378–threonine 733 is uridylyl-removing. The region spanning valine 494–leucine 610 is the HD domain. 2 ACT domains span residues glutamate 734–serine 816 and valine 845–proline 926. A disordered region spans residues proline 926–threonine 949.

The protein belongs to the GlnD family. It depends on Mg(2+) as a cofactor.

It carries out the reaction [protein-PII]-L-tyrosine + UTP = [protein-PII]-uridylyl-L-tyrosine + diphosphate. It catalyses the reaction [protein-PII]-uridylyl-L-tyrosine + H2O = [protein-PII]-L-tyrosine + UMP + H(+). Its activity is regulated as follows. Uridylyltransferase (UTase) activity is inhibited by glutamine, while glutamine activates uridylyl-removing (UR) activity. Functionally, modifies, by uridylylation and deuridylylation, the PII regulatory proteins (GlnB and homologs), in response to the nitrogen status of the cell that GlnD senses through the glutamine level. Under low glutamine levels, catalyzes the conversion of the PII proteins and UTP to PII-UMP and PPi, while under higher glutamine levels, GlnD hydrolyzes PII-UMP to PII and UMP (deuridylylation). Thus, controls uridylylation state and activity of the PII proteins, and plays an important role in the regulation of nitrogen fixation and metabolism. In Rhizobium meliloti (strain 1021) (Ensifer meliloti), this protein is Bifunctional uridylyltransferase/uridylyl-removing enzyme.